Consider the following 61-residue polypeptide: Large ribosomal subunit protein bL32 (61 aa).

A compositionally biased stretch (basic residues) spans 1–16 (MAVPKRKTSPSKRGMR). The tract at residues 1-39 (MAVPKRKTSPSKRGMRRSADALKAPTYIEDKNSGELRRP) is disordered. The span at 28 to 39 (IEDKNSGELRRP) shows a compositional bias: basic and acidic residues.

It belongs to the bacterial ribosomal protein bL32 family.

In Rhizobium meliloti (strain 1021) (Ensifer meliloti), this protein is Large ribosomal subunit protein bL32.